The chain runs to 593 residues: MGPLWALRVAGALSVAGVLAGHDGSQRAGQPAALDAGTRGDGVGHDRGVDCREVRKRNSSERCRFVRGTPDCRLDGGFLDYLGGAFCTFPSSLLPLSVSLYALWLLYLFVILGVTAEKFFCPNLSAISTNLKLSHNGLGVVGHSLTPALHGVTFLAFGNGAPDIFSAVVAFSDPRTAGLAVGAIFGAGIFVTTVVAGGIALVKPFAAASRPFLRDVIFYMVAVFLTFLVLYFGYITLGEALGYLGLYVFYVFTVVLCTWIHRWQRGDGPPPPGPWEPAIPTDAEEQESSGTNCGDYGEEYRPLLPYHETSLHILSTALSPLDKHKWRRKPWYWRLFKVLKVPVELVLLLTVPVVDPDKDDLNWKRPLNCLHIVTGPLLCIFTLKSGAYGLYQIQGVFPVWALVALAGSVLAIIVFVTTHNEEPPKYHCVFAFLGFLSSAMWINAAATELVNILRTLGIIFELSNTVLGLTLLAWGNSIGDTFSDLTMARQGYPRMAFSACFGGIIFNILVGVGLGCLLQMTNSQMVVKLEPDSLLVWILAGALGLSLVFSFVAVPAQCFQLGKAYGTCLILYYLVFLCVALLTEFRVIHLAAT.

Positions 1 to 20 (MGPLWALRVAGALSVAGVLA) are cleaved as a signal peptide. At 21–93 (GHDGSQRAGQ…GAFCTFPSSL (73 aa)) the chain is on the extracellular side. N58 is a glycosylation site (N-linked (GlcNAc...) asparagine). The chain crosses the membrane as a helical span at residues 94 to 114 (LPLSVSLYALWLLYLFVILGV). The Cytoplasmic portion of the chain corresponds to 115 to 135 (TAEKFFCPNLSAISTNLKLSH). A helical membrane pass occupies residues 136-158 (NGLGVVGHSLTPALHGVTFLAFG). Topologically, residues 159-178 (NGAPDIFSAVVAFSDPRTAG) are extracellular. A helical membrane pass occupies residues 179–199 (LAVGAIFGAGIFVTTVVAGGI). Residues 200–215 (ALVKPFAAASRPFLRD) are Cytoplasmic-facing. The helical transmembrane segment at 216–236 (VIFYMVAVFLTFLVLYFGYIT) threads the bilayer. Residues 237 to 239 (LGE) lie on the Extracellular side of the membrane. The helical transmembrane segment at 240-260 (ALGYLGLYVFYVFTVVLCTWI) threads the bilayer. At 261–334 (HRWQRGDGPP…KWRRKPWYWR (74 aa)) the chain is on the cytoplasmic side. Residues 268–277 (GPPPPGPWEP) are compositionally biased toward pro residues. Positions 268–291 (GPPPPGPWEPAIPTDAEEQESSGT) are disordered. A helical transmembrane segment spans residues 335-355 (LFKVLKVPVELVLLLTVPVVD). At 356-369 (PDKDDLNWKRPLNC) the chain is on the extracellular side. The helical transmembrane segment at 370–390 (LHIVTGPLLCIFTLKSGAYGL) threads the bilayer. The Cytoplasmic portion of the chain corresponds to 391–395 (YQIQG). The chain crosses the membrane as a helical span at residues 396–416 (VFPVWALVALAGSVLAIIVFV). At 417 to 428 (TTHNEEPPKYHC) the chain is on the extracellular side. A helical membrane pass occupies residues 429-449 (VFAFLGFLSSAMWINAAATEL). Residues 450–454 (VNILR) are Cytoplasmic-facing. Residues 455–475 (TLGIIFELSNTVLGLTLLAWG) traverse the membrane as a helical segment. Residues 476-496 (NSIGDTFSDLTMARQGYPRMA) lie on the Extracellular side of the membrane. Residues 497-517 (FSACFGGIIFNILVGVGLGCL) traverse the membrane as a helical segment. Topologically, residues 518 to 533 (LQMTNSQMVVKLEPDS) are cytoplasmic. Residues 534 to 554 (LLVWILAGALGLSLVFSFVAV) form a helical membrane-spanning segment. Residues 555–564 (PAQCFQLGKA) are Extracellular-facing. The chain crosses the membrane as a helical span at residues 565–585 (YGTCLILYYLVFLCVALLTEF). Topologically, residues 586-593 (RVIHLAAT) are cytoplasmic.

It belongs to the Ca(2+):cation antiporter (CaCA) (TC 2.A.19) family. SLC24A subfamily.

It localises to the mitochondrion inner membrane. The enzyme catalyses Ca(2+)(in) + 3 Na(+)(out) = Ca(2+)(out) + 3 Na(+)(in). Functionally, mitochondrial sodium/calcium antiporter that mediates sodium-dependent calcium efflux from mitochondrion, by mediating the exchange of 3 sodium ions per 1 calcium ion. Plays a central role in mitochondrial calcium homeostasis by mediating mitochondrial calcium extrusion: calcium efflux is essential for mitochondrial function and cell survival, notably in cardiomyocytes. Involved in B-lymphocyte chemotaxis. This Gallus gallus (Chicken) protein is Mitochondrial sodium/calcium exchanger protein.